The following is a 552-amino-acid chain: uncharacterized protein (552 aa).

The next 4 helical transmembrane spans lie at 127–147 (AIML…ISLL), 160–180 (LIIV…YINI), 393–413 (LTKQ…LSAV), and 517–537 (VIDS…FICI).

It localises to the membrane. This is an uncharacterized protein from Saccharomyces cerevisiae (strain ATCC 204508 / S288c) (Baker's yeast).